A 180-amino-acid chain; its full sequence is Large ribosomal subunit protein bL19 (180 aa).

Belongs to the bacterial ribosomal protein bL19 family.

Functionally, this protein is located at the 30S-50S ribosomal subunit interface and may play a role in the structure and function of the aminoacyl-tRNA binding site. This chain is Large ribosomal subunit protein bL19, found in Allorhizobium ampelinum (strain ATCC BAA-846 / DSM 112012 / S4) (Agrobacterium vitis (strain S4)).